A 953-amino-acid chain; its full sequence is Xylosyltransferase 1 (953 aa).

At methionine 1–alanine 17 the chain is on the cytoplasmic side. Residues leucine 18–leucine 38 traverse the membrane as a helical; Signal-anchor for type II membrane protein segment. Residues aspartate 39–arginine 953 lie on the Lumenal side of the membrane. Residues alanine 48–alanine 62 are compositionally biased toward low complexity. Disordered stretches follow at residues alanine 48–arginine 67 and leucine 74–cysteine 251. Gly residues predominate over residues glycine 79–glycine 97. Over residues lysine 138–glutamate 154 the composition is skewed to basic and acidic residues. Positions valine 156 to threonine 165 are enriched in polar residues. 2 stretches are compositionally biased toward basic and acidic residues: residues histidine 170–glutamine 197 and glycine 205–alanine 216. Asparagine 219 is a glycosylation site (N-linked (GlcNAc...) asparagine). Cystine bridges form between cysteine 251/cysteine 279, cysteine 295/cysteine 536, cysteine 555/cysteine 568, and cysteine 557/cysteine 566. Residues valine 327, aspartate 355, and threonine 384–tryptophan 386 contribute to the UDP-alpha-D-xylose site. An N-linked (GlcNAc...) asparagine glycan is attached at asparagine 415. Position 488 to 489 (aspartate 488 to tryptophan 489) interacts with UDP-alpha-D-xylose. UDP-alpha-D-xylose contacts are provided by residues serine 569 and arginine 592–lysine 593. Cystine bridges form between cysteine 669-cysteine 921 and cysteine 914-cysteine 927. The N-linked (GlcNAc...) asparagine glycan is linked to asparagine 771. Residues serine 933–arginine 953 form a disordered region.

This sequence belongs to the glycosyltransferase 14 family. XylT subfamily. In terms of assembly, monomer. Requires a divalent metal cation as cofactor. Post-translationally, contains 7 disulfide bonds. In terms of processing, N-glycosylated. In terms of tissue distribution, detected in brain, spleen, kidney and testis, and at low levels in skeletal muscle.

It localises to the golgi apparatus membrane. The catalysed reaction is UDP-alpha-D-xylose + L-seryl-[protein] = 3-O-(beta-D-xylosyl)-L-seryl-[protein] + UDP + H(+). The protein operates within glycan metabolism; chondroitin sulfate biosynthesis. Its pathway is glycan metabolism; heparan sulfate biosynthesis. Its function is as follows. Catalyzes the first step in the biosynthesis of chondroitin sulfate and dermatan sulfate proteoglycans, such as DCN. Transfers D-xylose from UDP-D-xylose to specific serine residues of the core protein. Required for normal maturation of chondrocytes during bone development, normal onset of ossification and normal embryonic and postnatal skeleton development, especially of the long bones. The polypeptide is Xylosyltransferase 1 (Xylt1) (Mus musculus (Mouse)).